We begin with the raw amino-acid sequence, 122 residues long: MIQVQTMLKVADNTGAKKVMCIKVLGGSKRKYANIGDVIVASVKDATPGGVVKKGDVVRCVIVRSKRGIRRPDGSYIRFDENAAVLIREDKNPRGTRIFGPVARELRDKEYMKILSLAPEVL.

This sequence belongs to the universal ribosomal protein uL14 family. Part of the 50S ribosomal subunit. Forms a cluster with proteins L3 and L19. In the 70S ribosome, L14 and L19 interact and together make contacts with the 16S rRNA in bridges B5 and B8.

Its function is as follows. Binds to 23S rRNA. Forms part of two intersubunit bridges in the 70S ribosome. The sequence is that of Large ribosomal subunit protein uL14 from Acetivibrio thermocellus (strain ATCC 27405 / DSM 1237 / JCM 9322 / NBRC 103400 / NCIMB 10682 / NRRL B-4536 / VPI 7372) (Clostridium thermocellum).